We begin with the raw amino-acid sequence, 123 residues long: Histone H2B (123 aa).

The segment at M1 to R30 is disordered. Residue P2 is modified to N-methylproline; partial. K44 carries the post-translational modification N6-succinyllysine. A glycan (O-linked (GlcNAc) serine) is linked at S110. K114 and K118 each carry N6-succinyllysine. K118 participates in a covalent cross-link: Glycyl lysine isopeptide (Lys-Gly) (interchain with G-Cter in ubiquitin).

This sequence belongs to the histone H2B family. As to quaternary structure, the nucleosome is a histone octamer containing two molecules each of H2A, H2B, H3 and H4 assembled in one H3-H4 heterotetramer and two H2A-H2B heterodimers. The octamer wraps approximately 147 bp of DNA. Post-translationally, phosphorylated by the catalytic component of the Dbf4-dependent kinase (DDK) complex Cdc7. Monoubiquitination of Lys-118 by Bre1 gives a specific tag for epigenetic transcriptional activation and is also prerequisite for histone H3 'Lys-4' and 'Lys-79' methylation. Deubiquitination of Lys-118 by the SAGA complex is involved in activating transcription of a large subset of genes. In terms of processing, methylation at Pro-2 increases upon heat shock. Post-translationally, glcNAcylation at Ser-110 promotes monoubiquitination of Lys-118. It fluctuates in response to extracellular glucose, and associates with transcribed genes.

The protein resides in the nucleus. The protein localises to the chromosome. In terms of biological role, core component of nucleosome. Nucleosomes wrap and compact DNA into chromatin, limiting DNA accessibility to the cellular machineries which require DNA as a template. Histones thereby play a central role in transcription regulation, DNA repair, DNA replication and chromosomal stability. DNA accessibility is regulated via a complex set of post-translational modifications of histones, also called histone code, and nucleosome remodeling. The sequence is that of Histone H2B (His2B) from Drosophila yakuba (Fruit fly).